A 147-amino-acid polypeptide reads, in one-letter code: Nucleoside diphosphate kinase (147 aa).

Lys-11, Phe-59, Arg-87, Thr-93, Arg-104, and Asn-114 together coordinate ATP. His-117 acts as the Pros-phosphohistidine intermediate in catalysis.

Belongs to the NDK family. Mg(2+) is required as a cofactor.

The protein resides in the cytoplasm. It catalyses the reaction a 2'-deoxyribonucleoside 5'-diphosphate + ATP = a 2'-deoxyribonucleoside 5'-triphosphate + ADP. The catalysed reaction is a ribonucleoside 5'-diphosphate + ATP = a ribonucleoside 5'-triphosphate + ADP. Functionally, major role in the synthesis of nucleoside triphosphates other than ATP. The ATP gamma phosphate is transferred to the NDP beta phosphate via a ping-pong mechanism, using a phosphorylated active-site intermediate. In Sulfurisphaera tokodaii (strain DSM 16993 / JCM 10545 / NBRC 100140 / 7) (Sulfolobus tokodaii), this protein is Nucleoside diphosphate kinase.